The sequence spans 113 residues: Hydrogenase maturation factor HypA (113 aa).

Residue His2 coordinates Ni(2+). Residues Cys73, Cys76, Cys89, and Cys92 each coordinate Zn(2+).

It belongs to the HypA/HybF family.

In terms of biological role, involved in the maturation of [NiFe] hydrogenases. Required for nickel insertion into the metal center of the hydrogenase. The polypeptide is Hydrogenase maturation factor HypA (Rhodopseudomonas palustris (strain BisA53)).